The chain runs to 126 residues: Holo-[acyl-carrier-protein] synthase (126 aa).

Mg(2+) is bound by residues Asp9 and Glu58.

The protein belongs to the P-Pant transferase superfamily. AcpS family. It depends on Mg(2+) as a cofactor.

The protein localises to the cytoplasm. It catalyses the reaction apo-[ACP] + CoA = holo-[ACP] + adenosine 3',5'-bisphosphate + H(+). In terms of biological role, transfers the 4'-phosphopantetheine moiety from coenzyme A to a Ser of acyl-carrier-protein. The chain is Holo-[acyl-carrier-protein] synthase from Klebsiella pneumoniae subsp. pneumoniae (strain ATCC 700721 / MGH 78578).